The sequence spans 158 residues: NAD(P)H-quinone oxidoreductase subunit J, chloroplastic (158 aa).

It belongs to the complex I 30 kDa subunit family. In terms of assembly, NDH is composed of at least 16 different subunits, 5 of which are encoded in the nucleus.

The protein localises to the plastid. It localises to the chloroplast thylakoid membrane. It carries out the reaction a plastoquinone + NADH + (n+1) H(+)(in) = a plastoquinol + NAD(+) + n H(+)(out). The enzyme catalyses a plastoquinone + NADPH + (n+1) H(+)(in) = a plastoquinol + NADP(+) + n H(+)(out). Functionally, NDH shuttles electrons from NAD(P)H:plastoquinone, via FMN and iron-sulfur (Fe-S) centers, to quinones in the photosynthetic chain and possibly in a chloroplast respiratory chain. The immediate electron acceptor for the enzyme in this species is believed to be plastoquinone. Couples the redox reaction to proton translocation, and thus conserves the redox energy in a proton gradient. The protein is NAD(P)H-quinone oxidoreductase subunit J, chloroplastic of Panax ginseng (Korean ginseng).